Reading from the N-terminus, the 491-residue chain is MNTQQLAKLRTIVPEMRRVRHIHFVGIGGAGMGGIAEVLANEGYQISGSDLAPNPVTQHLTSLGAQIYFHHRPENVLDASVVVVSTAISADNPEIVAAREARIPVIRRAEMLAELMRFRHGIAVAGTHGKTTTTAMVSSIYAEAGLDPTFVNGGLVKAAGTHARLGSSRYLIAEADESDASFLHLQPMVAIVTNIEADHMDTYQGDFENLKQTFINFLHNLPFYGRAVMCIDDPVVRELLPRVGRHITTYGFSDDADVQIASYRQEGPQGHFTLKRLDKPLMTVTLNAPGRHNALNAAAAVAVATEEGIEDNDILRALAGFQGTGRRFDFLGNFPLAPVNGKEGSAMLVDDYGHHPTEVDATIKAARAGWPDKRIVMVFQPHRYTRTRDLYDDFANVLSQVDVLLMLDVYAAGEPPIPGADSRSLCRTIRNRGKLDPILVSDSETVPEVLAQVLNGDDLILVQGAGNIGKIARKLAELKLQPQTKDEEHHG.

An ATP-binding site is contributed by 126–132; it reads GTHGKTT.

It belongs to the MurCDEF family.

Its subcellular location is the cytoplasm. It catalyses the reaction UDP-N-acetyl-alpha-D-muramate + L-alanine + ATP = UDP-N-acetyl-alpha-D-muramoyl-L-alanine + ADP + phosphate + H(+). It participates in cell wall biogenesis; peptidoglycan biosynthesis. Its function is as follows. Cell wall formation. This Yersinia enterocolitica serotype O:8 / biotype 1B (strain NCTC 13174 / 8081) protein is UDP-N-acetylmuramate--L-alanine ligase.